We begin with the raw amino-acid sequence, 234 residues long: MKNAFRFKQFEIDQTGCAMRINTDGVLLGAVAGKNEAANILDIGTGTGVIALMLAQRFPNALVDAVEIDEQAALTATKNALNAPFSGRLKVLHSAIEDYLPEKYYDLIVSNPPYFVNDLKNPEHRKGVARHTDAHFFEQLLERVAAMLSRDGRFWFILPLKQAQNIVDMAKFYGLGMAVVLHIHSDENKPEIRQIVCLDYSGQPAHHHNLYIYAGKGLYTDAYKVLLKDFFLAF.

This sequence belongs to the methyltransferase superfamily. tRNA (adenine-N(6)-)-methyltransferase family.

It is found in the cytoplasm. The enzyme catalyses adenosine(37) in tRNA1(Val) + S-adenosyl-L-methionine = N(6)-methyladenosine(37) in tRNA1(Val) + S-adenosyl-L-homocysteine + H(+). Its function is as follows. Specifically methylates the adenine in position 37 of tRNA(1)(Val) (anticodon cmo5UAC). The polypeptide is tRNA1(Val) (adenine(37)-N6)-methyltransferase (Pedobacter heparinus (strain ATCC 13125 / DSM 2366 / CIP 104194 / JCM 7457 / NBRC 12017 / NCIMB 9290 / NRRL B-14731 / HIM 762-3)).